A 204-amino-acid chain; its full sequence is Thymidylate kinase (204 aa).

11–18 contributes to the ATP binding site; the sequence is GLDKSGKT.

The protein belongs to the thymidylate kinase family.

The catalysed reaction is dTMP + ATP = dTDP + ADP. It participates in pyrimidine metabolism; dTTP biosynthesis. This Cowpox virus (strain GRI-90 / Grishak) (CPV) protein is Thymidylate kinase (TMK).